Here is a 375-residue protein sequence, read N- to C-terminus: Protein RIC-3 (375 aa).

The signal sequence occupies residues 1–29; the sequence is MALSAVQKVVLFSCLVLCVSLLLPRAYIA. Over 30 to 90 the chain is Lumenal; that stretch reads RGKPAAQEGN…GGGGGTRPSL (61 aa). Residues 38–47 are compositionally biased toward polar residues; the sequence is GNTGLFQSSG. Residues 38-63 form a disordered region; that stretch reads GNTGLFQSSGHHPKPTDGRPGGAHFP. The helical transmembrane segment at 91–111 threads the bilayer; it reads VGQIIPIYGFGILLYILYILF. At 112 to 375 the chain is on the cytoplasmic side; that stretch reads KLSSKGKSTK…RKRNTKGIEY (264 aa). The stretch at 135–165 forms a coiled coil; sequence KRKITDYELSQLQDKLKETEEAMEKIISRLG. Residues 251–375 are disordered; sequence SAEQVAEQMG…RKRNTKGIEY (125 aa). Residues 286–296 show a composition bias toward polar residues; that stretch reads GDQQAQGTISA. The span at 305–319 shows a compositional bias: acidic residues; sequence EDIEEDEDEDEDPEV. The span at 365 to 375 shows a compositional bias: basic residues; sequence LRKRNTKGIEY.

The protein belongs to the ric-3 family.

The protein resides in the endoplasmic reticulum membrane. Its function is as follows. Molecular chaperone which facilitates proper subunit assembly andsurface trafficking of alpha-7 (CHRNA7) and alpha-8 (CHRNA8) nicotinic acetylcholine receptors. May also promote functional expression of homomeric serotoninergic 5-HT3 receptors, and of heteromeric acetylcholine receptors. The polypeptide is Protein RIC-3 (ric3) (Xenopus tropicalis (Western clawed frog)).